Reading from the N-terminus, the 64-residue chain is Toxin BmKIT3 (64 aa).

One can recognise an LCN-type CS-alpha/beta domain in the interval 1 to 61 (DGYIRGSNGC…TWKSESNTCG (61 aa)). Cystine bridges form between Cys10/Cys60, Cys14/Cys35, Cys21/Cys42, and Cys25/Cys44. A Cysteine amide modification is found at Cys60.

This sequence belongs to the long (4 C-C) scorpion toxin superfamily. Sodium channel inhibitor family. Beta subfamily. In terms of tissue distribution, expressed by the venom gland.

The protein localises to the secreted. In terms of biological role, depressant insect beta-toxins cause a transient contraction paralysis followed by a slow flaccid paralysis. They bind voltage-independently at site-4 of sodium channels (Nav) and shift the voltage of activation toward more negative potentials thereby affecting sodium channel activation and promoting spontaneous and repetitive firing. This is Toxin BmKIT3 from Olivierus martensii (Manchurian scorpion).